Reading from the N-terminus, the 568-residue chain is Phosphoprotein (568 aa).

Disordered regions lie at residues 1–23 (MDQD…GGRE) and 38–320 (SEPT…GIGE). Residues 7–20 (ILKEDSEVEREAPG) show a composition bias toward basic and acidic residues. The tract at residues 33 to 41 (DAVLSSEPT) is N0 binding. A compositionally biased stretch (polar residues) spans 50 to 59 (LHNTINTPQG). Serine 68 carries the phosphoserine; by host modification. Residues 83–101 (RSGEESRVSGRTSKPEAEA) show a composition bias toward basic and acidic residues. Residue serine 125 is modified to Phosphoserine; by host. Over residues 150–168 (GIEDENREMAAHPDKRGED) the composition is skewed to basic and acidic residues. Residues 191-206 (ASNNGRSMEPGSSHSA) are compositionally biased toward polar residues. A phosphoserine; by host mark is found at serine 192, serine 249, serine 257, and serine 260. Residues 344-411 (FESSRDASYV…SFRDTYKRFS (68 aa)) form a multimerization region. Residues 364–429 (YAEMTFNVCG…LLMSNLSTLH (66 aa)) are a coiled coil. Positions 412–445 (EYQKEQNSLLMSNLSTLHIITDRGGKTDNTDSLT) are l protein binding. Phosphoserine; by host is present on residues serine 447 and serine 449. The interaction with the nucleocapsid (N-RNA) stretch occupies residues 479–568 (DLIREDEFRD…VEEDIESLTN (90 aa)). The interval 496-516 (QERDTEPRASNASRLLPSKEK) is disordered.

Belongs to the respirovirus P protein family. In terms of assembly, homotetramer. Interacts (via multimerization domain) with polymerase L; this interaction forms the polymerase complex. Interacts (via N-terminus) with N0; this interaction allows P to chaperon N0 before encapsidation and form the N-P complex. Interacts (via C-terminus) with N-RNA template; this interaction positions the polymerase on the template. Phosphorylated by PKC/PRKCZ, and other unknown kinases. Phosphorylation is necessary for viral transcription and replication. The N-terminus contains the majority of phosphorylated sites. Ser-249 is the major site of phosphorylation, but is not necessary for most functions.

Its function is as follows. Essential cofactor of the RNA polymerase L that plays a central role in the transcription and replication by forming the polymerase complex with RNA polymerase L and recruiting L to the genomic N-RNA template for RNA synthesis. Also plays a central role in the encapsidation of nascent RNA chains by forming the encapsidation complex with the nucleocapsid protein N (N-P complex). Acts as a chaperone for newly synthesized free N protein, so-called N0, allowing encapsidation of nascent RNA chains during replication. The nucleoprotein protein N prevents excessive phosphorylation of P, which leads to down-regulation of viral transcription/ replication. Participates, together with N, in the formation of viral factories (viroplasms), which are large inclusions in the host cytoplasm where replication takes place. Recruits host PI4KB and remodel the host endoplasmic reticulum membrane to form viral replication factories. This Sendai virus (strain Z) (SeV) protein is Phosphoprotein (P/V/C).